We begin with the raw amino-acid sequence, 418 residues long: Imidazolonepropionase (418 aa).

The Fe(3+) site is built by His-80 and His-82. Zn(2+) is bound by residues His-80 and His-82. The 4-imidazolone-5-propanoate site is built by Arg-89, Tyr-152, and His-185. Tyr-152 is a binding site for N-formimidoyl-L-glutamate. His-250 contacts Fe(3+). His-250 serves as a coordination point for Zn(2+). Gln-253 is a binding site for 4-imidazolone-5-propanoate. Position 325 (Asp-325) interacts with Fe(3+). A Zn(2+)-binding site is contributed by Asp-325. Asn-327 and Gly-329 together coordinate N-formimidoyl-L-glutamate. Ser-330 is a 4-imidazolone-5-propanoate binding site.

Belongs to the metallo-dependent hydrolases superfamily. HutI family. Zn(2+) serves as cofactor. It depends on Fe(3+) as a cofactor.

The protein localises to the cytoplasm. It catalyses the reaction 4-imidazolone-5-propanoate + H2O = N-formimidoyl-L-glutamate. It participates in amino-acid degradation; L-histidine degradation into L-glutamate; N-formimidoyl-L-glutamate from L-histidine: step 3/3. Catalyzes the hydrolytic cleavage of the carbon-nitrogen bond in imidazolone-5-propanoate to yield N-formimidoyl-L-glutamate. It is the third step in the universal histidine degradation pathway. In Solibacter usitatus (strain Ellin6076), this protein is Imidazolonepropionase.